A 242-amino-acid polypeptide reads, in one-letter code: ATP-dependent dethiobiotin synthetase BioD (242 aa).

Residue 12-17 (EVGKTV) coordinates ATP. Thr-16 is a Mg(2+) binding site. Residue Lys-37 is part of the active site. Ser-41 is a binding site for substrate. ATP is bound by residues Asp-51 and 112-115 (EGAG). Mg(2+) is bound by residues Asp-51 and Glu-112.

The protein belongs to the dethiobiotin synthetase family. As to quaternary structure, homodimer. It depends on Mg(2+) as a cofactor.

The protein resides in the cytoplasm. The catalysed reaction is (7R,8S)-7,8-diammoniononanoate + CO2 + ATP = (4R,5S)-dethiobiotin + ADP + phosphate + 3 H(+). Its pathway is cofactor biosynthesis; biotin biosynthesis; biotin from 7,8-diaminononanoate: step 1/2. Functionally, catalyzes a mechanistically unusual reaction, the ATP-dependent insertion of CO2 between the N7 and N8 nitrogen atoms of 7,8-diaminopelargonic acid (DAPA, also called 7,8-diammoniononanoate) to form a ureido ring. The sequence is that of ATP-dependent dethiobiotin synthetase BioD from Bacillus cereus (strain ATCC 14579 / DSM 31 / CCUG 7414 / JCM 2152 / NBRC 15305 / NCIMB 9373 / NCTC 2599 / NRRL B-3711).